A 189-amino-acid polypeptide reads, in one-letter code: UPF0398 protein lp_1753 (189 aa).

This sequence belongs to the UPF0398 family.

In Lactiplantibacillus plantarum (strain ATCC BAA-793 / NCIMB 8826 / WCFS1) (Lactobacillus plantarum), this protein is UPF0398 protein lp_1753.